The sequence spans 172 residues: S-ribosylhomocysteine lyase (172 aa).

Residues histidine 54, histidine 58, and cysteine 128 each coordinate Fe cation.

The protein belongs to the LuxS family. Homodimer. Requires Fe cation as cofactor.

It carries out the reaction S-(5-deoxy-D-ribos-5-yl)-L-homocysteine = (S)-4,5-dihydroxypentane-2,3-dione + L-homocysteine. Functionally, involved in the synthesis of autoinducer 2 (AI-2) which is secreted by bacteria and is used to communicate both the cell density and the metabolic potential of the environment. The regulation of gene expression in response to changes in cell density is called quorum sensing. Catalyzes the transformation of S-ribosylhomocysteine (RHC) to homocysteine (HC) and 4,5-dihydroxy-2,3-pentadione (DPD). The protein is S-ribosylhomocysteine lyase of Aliivibrio fischeri (strain MJ11) (Vibrio fischeri).